The sequence spans 1067 residues: UPF0507 protein KLLA0D01133g (1067 aa).

In terms of domain architecture, VPS9 spans 280 to 432 (IVEDQELEHR…FHQDTVDSLT (153 aa)).

The protein belongs to the UPF0507 family.

The chain is UPF0507 protein KLLA0D01133g from Kluyveromyces lactis (strain ATCC 8585 / CBS 2359 / DSM 70799 / NBRC 1267 / NRRL Y-1140 / WM37) (Yeast).